Here is a 397-residue protein sequence, read N- to C-terminus: Serpin B10 (397 aa).

The disordered stretch occupies residues 62-85 (RDQGVKSSPESEKKRKMEFNSSNS). Residues 70-79 (PESEKKRKME) are compositionally biased toward basic and acidic residues. The Nuclear localization signal motif lies at 74 to 77 (KKRK).

This sequence belongs to the serpin family. Ov-serpin subfamily.

Its subcellular location is the nucleus. It localises to the cytoplasm. Functionally, protease inhibitor that may play a role in the regulation of protease activities during hematopoiesis and apoptosis induced by TNF. May regulate protease activities in the cytoplasm and in the nucleus. The sequence is that of Serpin B10 (SERPINB10) from Papio anubis (Olive baboon).